We begin with the raw amino-acid sequence, 1107 residues long: Phospholipid-transporting ATPase 2 (1107 aa).

Topologically, residues 1-33 are cytoplasmic; sequence MKRFVYINDDEASKELCCDNRISNRKYTLWNFL. The chain crosses the membrane as a helical span at residues 34–55; sequence PKNLWEQFSRFMNQYFLLIACL. Topologically, residues 56 to 60 are extracellular; sequence QLWSL. The helical transmembrane segment at 61 to 83 threads the bilayer; the sequence is ITPVNPASTWGPLIFIFAVSASK. Topologically, residues 84–268 are cytoplasmic; the sequence is EAWDDYHRYL…TAMDAMIDKL (185 aa). Residues 269–290 form a helical membrane-spanning segment; that stretch reads TGAIFVFQIVVVLVLGIAGNVW. Residues 291-315 are Extracellular-facing; the sequence is KDTEARKQWYVQYPEEAPWYELLVI. Residues 316-333 traverse the membrane as a helical segment; sequence PLRFELLCSIMIPISIKV. Topologically, residues 334–807 are cytoplasmic; it reads SLDLVKGLYA…HGRYSYNRTA (474 aa). Asp-381 serves as the catalytic 4-aspartylphosphate intermediate. Mg(2+) contacts are provided by Asp-752 and Asp-756. The helical transmembrane segment at 808 to 827 threads the bilayer; that stretch reads FLSQYSFYKSLLICFIQIFF. The Extracellular segment spans residues 828–841; it reads SFISGVSGTSLFNS. The helical transmembrane segment at 842 to 860 threads the bilayer; the sequence is VSLMAYNVFYTSVPVLVSV. Residues 861–890 are Cytoplasmic-facing; sequence IDKDLSEASVMQHPQILFYCQAGRLLNPST. A helical membrane pass occupies residues 891 to 912; that stretch reads FAGWFGRSLFHAIIVFVITIHA. At 913-919 the chain is on the extracellular side; that stretch reads YAYEKSE. The chain crosses the membrane as a helical span at residues 920–942; that stretch reads MEELGMVALSGCIWLQAFVVAQE. Residues 943–948 are Cytoplasmic-facing; that stretch reads TNSFTV. A helical membrane pass occupies residues 949–969; it reads LQHLSIWGNLVGFYAINFLFS. The Extracellular segment spans residues 970–982; that stretch reads AIPSSGMYTIMFR. Residues 983-1007 form a helical membrane-spanning segment; the sequence is LCSQPSYWITMFLIVGAGMGPIFAL. Residues 1008–1107 are Cytoplasmic-facing; sequence KYFRYTYRPS…SGYTRNCKDN (100 aa). The segment at 1048 to 1075 is disordered; it reads DLSPISITQPKNRSPVYEPLLSDSPNAT. Ser-1050 bears the Phosphoserine mark.

This sequence belongs to the cation transport ATPase (P-type) (TC 3.A.3) family. Type IV subfamily. Interacts with ALIS1, ALIS3 and ALIS5 in a heterologous system.

Its subcellular location is the endoplasmic reticulum membrane. It localises to the prevacuolar compartment membrane. It carries out the reaction ATP + H2O + phospholipidSide 1 = ADP + phosphate + phospholipidSide 2.. Its function is as follows. Involved in transport of phospholipids. Contributes to transmembrane flipping of lipids. Requires an interaction with a protein of the ALIS family for activity. Specific for phosphatidylserine and has no activity with lysolipid, phosphatidylcholine or phosphatidylethanolamine. In Arabidopsis thaliana (Mouse-ear cress), this protein is Phospholipid-transporting ATPase 2.